The sequence spans 536 residues: uncharacterized protein (536 aa).

Disordered regions lie at residues 1–76 (MSFT…SPAS) and 204–237 (NWNSSSSFTSSTSSTPISSSYSSSGTLPSKSNKS). Low complexity-rich tracts occupy residues 7–76 (TSSV…SPAS) and 204–234 (NWNSSSSFTSSTSSTPISSSYSSSGTLPSKS). The helical transmembrane segment at 247–267 (CSVAIPVGVVLILIGLGIFLW) threads the bilayer. 2 disordered regions span residues 287–354 (YGFN…LLGG) and 373–536 (DASD…LNLF). The segment covering 290-326 (NPNQPSNFRSPNRAPSTNNRYRGWNGSPTPAAGNNTN) has biased composition (polar residues). Residues 327–350 (GRPVAPRPSAGAGGANPPAASQPG) are compositionally biased toward low complexity. The chain crosses the membrane as a helical span at residues 351–371 (LLGGSSNSAGPIAAATAAGVG). The segment covering 403 to 424 (SASNEAEATMPPSNGSNFSEGL) has biased composition (polar residues). Residues 430–454 (ESGPAVGAAGAAAEAAEHSGSGSDS) are compositionally biased toward low complexity. The segment covering 480–509 (SYGSRAALSSRSQSNLLSPTSTGASNQPNY) has biased composition (polar residues). Low complexity predominate over residues 517-527 (SSSNVSIPRSS).

The protein localises to the membrane. This is an uncharacterized protein from Schizosaccharomyces pombe (strain 972 / ATCC 24843) (Fission yeast).